The sequence spans 398 residues: Delta-aminolevulinic acid dehydratase, chloroplastic (398 aa).

The tract at residues V48 to S87 is disordered. Residues E50–A59 are compositionally biased toward pro residues. Over residues S60–S69 the composition is skewed to low complexity. Over residues R74–P83 the composition is skewed to basic residues. Residue K266 is the Schiff-base intermediate with substrate of the active site. Positions 276 and 288 each coordinate 5-aminolevulinate. E304 is a binding site for Mg(2+). K319 serves as the catalytic Schiff-base intermediate with substrate. 5-aminolevulinate-binding residues include S345 and Y384.

The protein belongs to the ALAD family. As to quaternary structure, homooctamer; formed by oligomerization of dimers. Probably also forms lower oligomers. The cofactor is Mg(2+).

The protein resides in the plastid. It localises to the chloroplast. The catalysed reaction is 2 5-aminolevulinate = porphobilinogen + 2 H2O + H(+). It functions in the pathway porphyrin-containing compound metabolism; protoporphyrin-IX biosynthesis; coproporphyrinogen-III from 5-aminolevulinate: step 1/4. Its activity is regulated as follows. Activated by magnesium. Inhibited by succinyl acetone. Enzyme activity may depend on the oligomerization state, where the fully active octamer may dissociate and reassemble into less active lower oligomers. Its function is as follows. Catalyzes an early step in the biosynthesis of tetrapyrroles. Binds two molecules of 5-aminolevulinate per subunit, each at a distinct site, and catalyzes their condensation to form porphobilinogen. This is Delta-aminolevulinic acid dehydratase, chloroplastic (HEMB) from Pisum sativum (Garden pea).